The chain runs to 83 residues: Cytochrome b559 subunit alpha (83 aa).

Residues 21–35 (VIHSITIPSLFIAGW) form a helical membrane-spanning segment. His23 serves as a coordination point for heme.

The protein belongs to the PsbE/PsbF family. In terms of assembly, heterodimer of an alpha subunit and a beta subunit. PSII is composed of 1 copy each of membrane proteins PsbA, PsbB, PsbC, PsbD, PsbE, PsbF, PsbH, PsbI, PsbJ, PsbK, PsbL, PsbM, PsbT, PsbX, PsbY, PsbZ, Psb30/Ycf12, at least 3 peripheral proteins of the oxygen-evolving complex and a large number of cofactors. It forms dimeric complexes. Requires heme b as cofactor.

The protein resides in the plastid. It is found in the chloroplast thylakoid membrane. In terms of biological role, this b-type cytochrome is tightly associated with the reaction center of photosystem II (PSII). PSII is a light-driven water:plastoquinone oxidoreductase that uses light energy to abstract electrons from H(2)O, generating O(2) and a proton gradient subsequently used for ATP formation. It consists of a core antenna complex that captures photons, and an electron transfer chain that converts photonic excitation into a charge separation. In Chara vulgaris (Common stonewort), this protein is Cytochrome b559 subunit alpha.